Consider the following 416-residue polypeptide: Chaperone protein dnaJ A6 (416 aa).

One can recognise a J domain in the interval Lys-12 to Gly-73. The CR-type zinc-finger motif lies at Gly-133–Lys-217. Residues Cys-146, Cys-149, Cys-162, Cys-165, Cys-189, Cys-192, Cys-205, and Cys-208 each coordinate Zn(2+). CXXCXGXG motif repeat units follow at residues Cys-146–Gly-153, Cys-162–Gly-169, and Cys-189–Gly-196. A compositionally biased stretch (basic and acidic residues) spans His-380 to Ala-399. A disordered region spans residues His-380–Gln-416.

The protein belongs to the DnaJ family. As to quaternary structure, interacts with ZFP1.

Its subcellular location is the nucleus. The protein localises to the cytoplasm. Its function is as follows. Involved in disease resistance. Acts as a negative regulator of innate immunity to the rice blast fungus (Magnaporthe oryzae). Acts as a negative regulator of the pathogen-associated molecular pattern (PAMP)-triggered immunity (PTI) response through the inhibition of reactive oxygen species (ROS) accumulation and expression of defense-related genes. May function via the ubiquitin-proteasome degradation pathway. The sequence is that of Chaperone protein dnaJ A6 from Oryza sativa subsp. japonica (Rice).